Here is a 200-residue protein sequence, read N- to C-terminus: Vacuolar iron transporter homolog 1 (200 aa).

The Cytoplasmic segment spans residues 1–34 (MESHNVSNSLNLDMEMDQEKAFDYSKRAQWLRAA). Residues 35-55 (VLGANDGLVSTASLMMGVGAV) traverse the membrane as a helical segment. Over 56-62 (KQDVKVM) the chain is Vacuolar. A helical membrane pass occupies residues 63–83 (ILSGFAGLVAGACSMAIGEFV). Topologically, residues 84–116 (SVYSQYDIEVAQMKRENGGQVEKEKLPSPMQAA) are cytoplasmic. The chain crosses the membrane as a helical span at residues 117-137 (AASALAFSLGAIVPLMAAAFV). The Vacuolar portion of the chain corresponds to 138–143 (KDYHVR). Residues 144–164 (IGAIVAAVTLALVMFGWLGAV) traverse the membrane as a helical segment. The Cytoplasmic portion of the chain corresponds to 165 to 176 (LGKAPVFKSSAR). A helical membrane pass occupies residues 177-197 (VLIGGWLAMAVTFGLTKLIGT). The Vacuolar portion of the chain corresponds to 198–200 (HSL).

The protein belongs to the CCC1 family. Expressed in the vascular bundles of the shoot and the stele of the root. Expressed in inflorescences and at lower levels in leaves.

Its subcellular location is the vacuole membrane. The catalysed reaction is Fe(2+)(in) = Fe(2+)(out). Vacuolar iron transporter involved in the transfer of iron ions from the cytosol to the vacuole for intracellular iron storage. Involved in regulation of cellular iron homeostasis. Vacuolar iron storage is required for seed embryo and seedling development. The chain is Vacuolar iron transporter homolog 1 from Arabidopsis thaliana (Mouse-ear cress).